The primary structure comprises 299 residues: uncharacterized protein (299 aa).

Residues 4–20 (LFFIFVMLIVLLCGCTS) traverse the membrane as a helical segment.

Its subcellular location is the membrane. This is an uncharacterized protein from Methanocaldococcus jannaschii (strain ATCC 43067 / DSM 2661 / JAL-1 / JCM 10045 / NBRC 100440) (Methanococcus jannaschii).